The primary structure comprises 334 residues: Ornithine carbamoyltransferase (334 aa).

Residues 56–59, Gln83, Arg107, and 134–137 contribute to the carbamoyl phosphate site; these read STRT and HPTQ. L-ornithine is bound by residues Asn168, Asp232, and 236–237; that span reads SM. Carbamoyl phosphate is bound by residues 274–275 and Arg320; that span reads CL.

This sequence belongs to the aspartate/ornithine carbamoyltransferase superfamily. OTCase family.

The protein resides in the cytoplasm. It carries out the reaction carbamoyl phosphate + L-ornithine = L-citrulline + phosphate + H(+). It participates in amino-acid biosynthesis; L-arginine biosynthesis; L-arginine from L-ornithine and carbamoyl phosphate: step 1/3. In terms of biological role, reversibly catalyzes the transfer of the carbamoyl group from carbamoyl phosphate (CP) to the N(epsilon) atom of ornithine (ORN) to produce L-citrulline. The polypeptide is Ornithine carbamoyltransferase (Shigella dysenteriae serotype 1 (strain Sd197)).